Reading from the N-terminus, the 239-residue chain is Pathogenesis-related protein 5 (239 aa).

An N-terminal signal peptide occupies residues 1-23; sequence MANISSIHILFLVFITSGIAVMA. 8 cysteine pairs are disulfide-bonded: Cys-32–Cys-238, Cys-79–Cys-89, Cys-94–Cys-99, Cys-146–Cys-228, Cys-151–Cys-211, Cys-159–Cys-174, Cys-178–Cys-187, and Cys-188–Cys-198.

This sequence belongs to the thaumatin family.

Its subcellular location is the secreted. The protein localises to the extracellular space. It is found in the apoplast. Partially responsible for acquired pathogen resistance. The sequence is that of Pathogenesis-related protein 5 from Arabidopsis thaliana (Mouse-ear cress).